A 311-amino-acid polypeptide reads, in one-letter code: tRNA-cytidine(32) 2-sulfurtransferase (311 aa).

The short motif at 47-52 (SGGKDS) is the PP-loop motif element. Residues Cys122, Cys125, and Cys213 each coordinate [4Fe-4S] cluster.

This sequence belongs to the TtcA family. Homodimer. The cofactor is Mg(2+). [4Fe-4S] cluster is required as a cofactor.

The protein localises to the cytoplasm. The enzyme catalyses cytidine(32) in tRNA + S-sulfanyl-L-cysteinyl-[cysteine desulfurase] + AH2 + ATP = 2-thiocytidine(32) in tRNA + L-cysteinyl-[cysteine desulfurase] + A + AMP + diphosphate + H(+). It functions in the pathway tRNA modification. Its function is as follows. Catalyzes the ATP-dependent 2-thiolation of cytidine in position 32 of tRNA, to form 2-thiocytidine (s(2)C32). The sulfur atoms are provided by the cysteine/cysteine desulfurase (IscS) system. The sequence is that of tRNA-cytidine(32) 2-sulfurtransferase from Pectobacterium carotovorum subsp. carotovorum (strain PC1).